The sequence spans 843 residues: Protein translocase subunit SecA 1 (843 aa).

Residues Gln91, 109–113 (GEGKT), and Asp498 contribute to the ATP site. Basic and acidic residues predominate over residues 799-813 (EAKHVSAEDGKEKVK). Residues 799 to 826 (EAKHVSAEDGKEKVKPKPIVKGDQVGRN) are disordered. The Zn(2+) site is built by Cys829, Cys831, Cys840, and His841.

This sequence belongs to the SecA family. Monomer and homodimer. Part of the essential Sec protein translocation apparatus which comprises SecA, SecYEG and auxiliary proteins SecDF. Other proteins may also be involved. The cofactor is Zn(2+).

Its subcellular location is the cell membrane. The protein resides in the cytoplasm. It catalyses the reaction ATP + H2O + cellular proteinSide 1 = ADP + phosphate + cellular proteinSide 2.. In terms of biological role, part of the Sec protein translocase complex. Interacts with the SecYEG preprotein conducting channel. Has a central role in coupling the hydrolysis of ATP to the transfer of proteins into and across the cell membrane, serving as an ATP-driven molecular motor driving the stepwise translocation of polypeptide chains across the membrane. This Staphylococcus aureus (strain MRSA252) protein is Protein translocase subunit SecA 1.